The primary structure comprises 732 residues: Nephrocystin-1 (732 aa).

Positions 3 to 105 (ARRQRDPLQA…LQGLAVTISR (103 aa)) form a coiled coil. The residue at position 46 (Y46) is a Phosphotyrosine; by FAK2. Disordered stretches follow at residues 103–153 (ISRE…KWST) and 205–244 (TYLE…KQRT). Acidic residues-rich tracts occupy residues 115-145 (TEEE…EKEE) and 210-236 (YSEE…ETAD). A phosphoserine; by CK2 mark is found at S121, S123, and S126. Residues 127 to 150 (EDSGGEEEDAEEEEEEKEENESHK) are a coiled coil. The SH3 domain occupies 152–212 (STGEEYIAVG…PRTYLEPYSE (61 aa)). A Phosphotyrosine; by FAK2 modification is found at Y349. The residue at position 721 (Y721) is a Phosphotyrosine; by SRC.

This sequence belongs to the nephrocystin-1 family. Interacts with BCAR1, PTK2B/PYK2 and tensin. Interacts with INVS and NPHP3. Interacts with PACS1; the interaction is dependent on NPHP1 phosphorylation by CK2. Interacts with KIF7. Interacts with AHI1 and TNK2. Interacts with NPHP4 in a complex containing NPHP1, NPHP4 and RPGRIP1L. Interacts with IQCB1; the interaction likely requires additional interactors. Interacts with ANKS3. Interacts with SPATA7. Interacts with FLNA. In terms of processing, phosphorylation by CK2 is required for the interaction with PACS1 and the targeting to the base region of cilia. As to expression, widespread expression, with highest levels in pituitary gland, spinal cord, thyroid gland, testis, skeletal muscle, lymph node and trachea. Weakly expressed in heart, kidney and pancreas. Expressed in nasal epithelial cells (at protein level). Expressed in the renal collecting duct (at protein level).

It is found in the cell junction. It localises to the adherens junction. The protein resides in the cell projection. Its subcellular location is the cilium. The protein localises to the cytoplasm. It is found in the cytoskeleton. It localises to the cilium axoneme. The protein resides in the tight junction. In terms of biological role, together with BCAR1 it may play a role in the control of epithelial cell polarity. Involved in the organization of apical junctions in kidney cells together with NPHP4 and RPGRIP1L/NPHP8. Does not seem to be strictly required for ciliogenesis. Seems to help to recruit PTK2B/PYK2 to cell matrix adhesions, thereby initiating phosphorylation of PTK2B/PYK2 and PTK2B/PYK2-dependent signaling. May play a role in the regulation of intraflagellar transport (IFT) during cilia assembly. Required for normal retina development. In connecting photoreceptor cilia influences the movement of some IFT proteins such as IFT88 and WDR19. Involved in spermatogenesis. In Homo sapiens (Human), this protein is Nephrocystin-1 (NPHP1).